Consider the following 311-residue polypeptide: Formimidoylglutamase (311 aa).

Residues His-122, Asp-151, His-153, Asp-155, Cys-242, and Asp-244 each coordinate Mn(2+).

Belongs to the arginase family. Mn(2+) is required as a cofactor.

The catalysed reaction is N-formimidoyl-L-glutamate + H2O = formamide + L-glutamate. It participates in amino-acid degradation; L-histidine degradation into L-glutamate; L-glutamate from N-formimidoyl-L-glutamate (hydrolase route): step 1/1. In terms of biological role, catalyzes the conversion of N-formimidoyl-L-glutamate to L-glutamate and formamide. The protein is Formimidoylglutamase of Pseudomonas aeruginosa (strain UCBPP-PA14).